Here is a 61-residue protein sequence, read N- to C-terminus: [Thr6, Val10, Asp11]-phyllokinin (61 aa).

Positions 1 to 22 are cleaved as a signal peptide; sequence MSFLKKSLFLVLFLGLVSFSIC. A propeptide spanning residues 23 to 50 is cleaved from the precursor; the sequence is EEEKRETEEEENEDEMNEESEEKRESPE. The segment at 24 to 61 is disordered; that stretch reads EEKRETEEEENEDEMNEESEEKRESPERPPGFTPFRVD. A compositionally biased stretch (acidic residues) spans 30 to 42; that stretch reads EEEENEDEMNEES.

Belongs to the frog skin active peptide (FSAP) family. Bradykinin-related peptide subfamily. As to expression, expressed by the skin glands.

The protein resides in the secreted. Its function is as follows. Induces relaxation of rat smooth muscle from tail artery and contraction of that from ileum, urinary bladder and uterus. Binds to both bradykinin receptor B1 (BDKRB1) and B2 (BDKRB2). The polypeptide is [Thr6, Val10, Asp11]-phyllokinin (Agalychnis spurrelli (Gliding leaf frog)).